A 174-amino-acid chain; its full sequence is Translationally-controlled tumor protein homolog 1 (174 aa).

In terms of domain architecture, TCTP spans Met-1–Tyr-174.

Belongs to the TCTP family.

The protein localises to the cytoplasm. In terms of biological role, involved in calcium binding and microtubule stabilization. The polypeptide is Translationally-controlled tumor protein homolog 1 (Dictyostelium discoideum (Social amoeba)).